The sequence spans 67 residues: Large ribosomal subunit protein uL29 (67 aa).

It belongs to the universal ribosomal protein uL29 family.

The protein is Large ribosomal subunit protein uL29 of Solibacter usitatus (strain Ellin6076).